The primary structure comprises 95 residues: Aspartyl/glutamyl-tRNA(Asn/Gln) amidotransferase subunit C (95 aa).

The protein belongs to the GatC family. Heterotrimer of A, B and C subunits.

It catalyses the reaction L-glutamyl-tRNA(Gln) + L-glutamine + ATP + H2O = L-glutaminyl-tRNA(Gln) + L-glutamate + ADP + phosphate + H(+). The enzyme catalyses L-aspartyl-tRNA(Asn) + L-glutamine + ATP + H2O = L-asparaginyl-tRNA(Asn) + L-glutamate + ADP + phosphate + 2 H(+). Its function is as follows. Allows the formation of correctly charged Asn-tRNA(Asn) or Gln-tRNA(Gln) through the transamidation of misacylated Asp-tRNA(Asn) or Glu-tRNA(Gln) in organisms which lack either or both of asparaginyl-tRNA or glutaminyl-tRNA synthetases. The reaction takes place in the presence of glutamine and ATP through an activated phospho-Asp-tRNA(Asn) or phospho-Glu-tRNA(Gln). This Cytophaga hutchinsonii (strain ATCC 33406 / DSM 1761 / CIP 103989 / NBRC 15051 / NCIMB 9469 / D465) protein is Aspartyl/glutamyl-tRNA(Asn/Gln) amidotransferase subunit C.